We begin with the raw amino-acid sequence, 438 residues long: Ubiquitin carboxyl-terminal hydrolase 27 (438 aa).

The USP domain maps to Arg-78–Gln-421. Cys-87 (nucleophile) is an active-site residue. His-380 acts as the Proton acceptor in catalysis.

The protein belongs to the peptidase C19 family. As to quaternary structure, interacts with phosphorylated BCL2L11 isoform BIMEL; this interaction leads to BCL2L11 deubiquitination and stabilization.

The protein localises to the cytoplasm. It is found in the cytosol. It localises to the nucleus. The enzyme catalyses Thiol-dependent hydrolysis of ester, thioester, amide, peptide and isopeptide bonds formed by the C-terminal Gly of ubiquitin (a 76-residue protein attached to proteins as an intracellular targeting signal).. Deubiquitinase involved in innate antiviral immunity by mediating deubiquitination of CGAS and RIGI. Negatively regulates RIGI by mediating 'Lys-63'-linked deubiquitination of RIGI, inhibiting type I interferon signaling. Also regulates 'Lys-63'-linked ubiquitination level of MDA5/IFIH1. Acts as a positive regulator of the cGAS-STING pathway by catalyzing 'Lys-48'-linked deubiquitination of CGAS, thereby promoting its stabilization. Can reduce the levels of BCL2L11/BIM ubiquitination and stabilize BCL2L11 in response to the RAF-MAPK-degradation signal. By acting on BCL2L11 levels, may counteract the anti-apoptotic effects of MAPK activity. The sequence is that of Ubiquitin carboxyl-terminal hydrolase 27 from Homo sapiens (Human).